A 95-amino-acid polypeptide reads, in one-letter code: Signal recognition particle 19 kDa protein (95 aa).

Belongs to the SRP19 family. In terms of assembly, part of the signal recognition particle protein translocation system, which is composed of SRP and FtsY. Archaeal SRP consists of a 7S RNA molecule of 300 nucleotides and two protein subunits: SRP54 and SRP19.

It is found in the cytoplasm. Involved in targeting and insertion of nascent membrane proteins into the cytoplasmic membrane. Binds directly to 7S RNA and mediates binding of the 54 kDa subunit of the SRP. The polypeptide is Signal recognition particle 19 kDa protein (Staphylothermus marinus (strain ATCC 43588 / DSM 3639 / JCM 9404 / F1)).